Reading from the N-terminus, the 131-residue chain is Small ribosomal subunit protein uS11 (131 aa).

The protein belongs to the universal ribosomal protein uS11 family. In terms of assembly, part of the 30S ribosomal subunit. Interacts with proteins S7 and S18. Binds to IF-3.

Its function is as follows. Located on the platform of the 30S subunit, it bridges several disparate RNA helices of the 16S rRNA. Forms part of the Shine-Dalgarno cleft in the 70S ribosome. This is Small ribosomal subunit protein uS11 from Thermotoga neapolitana (strain ATCC 49049 / DSM 4359 / NBRC 107923 / NS-E).